The following is a 343-amino-acid chain: Ferredoxin--NADP reductase (343 aa).

FAD is bound by residues D31, K39, Y43, V83, I118, D285, and S326.

Belongs to the ferredoxin--NADP reductase type 2 family. As to quaternary structure, homodimer. FAD is required as a cofactor.

The enzyme catalyses 2 reduced [2Fe-2S]-[ferredoxin] + NADP(+) + H(+) = 2 oxidized [2Fe-2S]-[ferredoxin] + NADPH. The polypeptide is Ferredoxin--NADP reductase (Staphylococcus saprophyticus subsp. saprophyticus (strain ATCC 15305 / DSM 20229 / NCIMB 8711 / NCTC 7292 / S-41)).